Here is a 38-residue protein sequence, read N- to C-terminus: Large ribosomal subunit protein bL36 (38 aa).

Belongs to the bacterial ribosomal protein bL36 family.

The sequence is that of Large ribosomal subunit protein bL36 from Buchnera aphidicola subsp. Cinara cedri (strain Cc).